The primary structure comprises 607 residues: Threonine--tRNA ligase (607 aa).

Residues 200–502 (DHRKLGRELG…LIEEYAGDFP (303 aa)) form a catalytic region. Cysteine 299, histidine 350, and histidine 479 together coordinate Zn(2+).

This sequence belongs to the class-II aminoacyl-tRNA synthetase family. Homodimer. The cofactor is Zn(2+).

The protein resides in the cytoplasm. The enzyme catalyses tRNA(Thr) + L-threonine + ATP = L-threonyl-tRNA(Thr) + AMP + diphosphate + H(+). In terms of biological role, catalyzes the attachment of threonine to tRNA(Thr) in a two-step reaction: L-threonine is first activated by ATP to form Thr-AMP and then transferred to the acceptor end of tRNA(Thr). Also edits incorrectly charged L-seryl-tRNA(Thr). The protein is Threonine--tRNA ligase of Synechococcus sp. (strain ATCC 27144 / PCC 6301 / SAUG 1402/1) (Anacystis nidulans).